A 380-amino-acid polypeptide reads, in one-letter code: MKLLARALRLCEFGRQASSRRLVAGQGCVGPRRGCCAPVQVVGPRADLPPCGACITGRIMRPDDANVAGNVHGGTILKMIEEAGAIISTRHCNSQNGERCVAALARVERTDFLSPMCIGEVAHVSAEITYTSKHSVEVQVNVMSENILTGAKKLTNKATLWYVPLSLKNVDKVLEVPPVVYSRQEQEEEGRKRYEAQKLERMETKWRNGDIVQPVLNPEPNTVSYSQSSLIHLVGPSDCTLHGFVHGGVTMKLMDEVAGIVAARHCKTNIVTASVDAINFHDKIRKGCVITISGRMTFTSNKSMEIEVLVDADPVVDSSQKRYRAASAFFTYVSLSQEGRSLPVPQLVPETEDEKKRFEEGKGRYLQMKAKRQGHAEPQP.

The region spanning Pro50–Lys168 is the HotDog ACOT-type 1 domain. Residue Asn66 is part of the active site. 2 positions are modified to N6-acetyllysine: Lys168 and Lys198. In terms of domain architecture, HotDog ACOT-type 2 spans Ser224 to Glu338. Asp255 is a catalytic residue. Residue Lys283 is modified to N6-acetyllysine. A disordered region spans residues Glu350 to Pro380. Residues Asp353–Gly363 are compositionally biased toward basic and acidic residues.

In terms of assembly, homohexamer. In terms of tissue distribution, isoform 4 is expressed exclusively in brain.

It is found in the cytoplasm. Its subcellular location is the cytosol. It localises to the mitochondrion. The enzyme catalyses hexadecanoyl-CoA + H2O = hexadecanoate + CoA + H(+). It catalyses the reaction octanoyl-CoA + H2O = octanoate + CoA + H(+). The catalysed reaction is dodecanoyl-CoA + H2O = dodecanoate + CoA + H(+). It carries out the reaction (9Z)-octadecenoyl-CoA + H2O = (9Z)-octadecenoate + CoA + H(+). The enzyme catalyses tetradecanoyl-CoA + H2O = tetradecanoate + CoA + H(+). It catalyses the reaction decanoyl-CoA + H2O = decanoate + CoA + H(+). The catalysed reaction is octadecanoyl-CoA + H2O = octadecanoate + CoA + H(+). The protein operates within lipid metabolism; fatty acid metabolism. In terms of biological role, catalyzes the hydrolysis of acyl-CoAs into free fatty acids and coenzyme A (CoASH), regulating their respective intracellular levels. Preferentially hydrolyzes palmitoyl-CoA, but has a broad specificity acting on other fatty acyl-CoAs with chain-lengths of C8-C18. May play an important physiological function in brain. This Homo sapiens (Human) protein is Cytosolic acyl coenzyme A thioester hydrolase (ACOT7).